The following is a 179-amino-acid chain: Transcription factor BOA15 (179 aa).

It localises to the nucleus. Its function is as follows. Transcription factor that probably coregulates the gene clusters that mediates the biosynthesis of botcinin acid and its botcinin derivatives, acetate-derived polyketides that contribute to virulence when combined with the sesquiterpene botrydial. Botcinin acid and its derivatives have been shown to induce chlorosis and necrosis during host plant infection, but also have antifungal activities. In Botryotinia fuckeliana (strain B05.10) (Noble rot fungus), this protein is Transcription factor BOA15.